The following is a 369-amino-acid chain: MSLTPLGQRLAEVAASPEEPWEILAENVPVWPEPPRLQAVGSWDLDAQYAPSQGTEELLEALRLRQREQGIDVGAESLLVTNGAFDGLGLIARHLTGKGVRRAVCAGPVLLSVADLLRDLGLDVQVPDWPELVGGRSWSALGPGDLLYLNSPHNPTGACLDEATARDLFAAQRRLGFALVLDLVYDAFVHDPAALAAPPALVEDWRGVYGLNSFSKNYGAPGLRVGWITADPQEVDRLTARMEWERIAVSTRAQSQAAQLCKLGNQPLTERVRAGHRLVLDWARANGMRVSPPQGGTHVWVEAGVPDTEALADALMAEHRLVVTTSAHYHPASSRHIRVPTGVEPAFLTRSLEAVSAVSERLRRSATVG.

An N6-(pyridoxal phosphate)lysine modification is found at lysine 216.

This sequence belongs to the class-I pyridoxal-phosphate-dependent aminotransferase family. The cofactor is pyridoxal 5'-phosphate.

The enzyme catalyses L-arginine + 2-oxoglutarate = 5-guanidino-2-oxopentanoate + L-glutamate. It catalyses the reaction (3R)-5-guanidino-3-methyl-2-oxopentanoate + L-aspartate = (3R)-3-methyl-L-arginine + oxaloacetate. The protein operates within antibiotic biosynthesis. Functionally, aminotransferase involved in the formation of the rare amino acid 3-methylarginine (MeArg), which is incorporated into the peptidyl nucleoside antibiotic arginomycin. Catalyzes two rounds of transamination: the transfer of the amino group from L-arginine to 2-oxoglutarate to give glutamate and 5-guanidino-2-oxopentanoic acid, which will be methylated by ArgN. Then, ArgM specifically catalyzes transamination from the donor L-aspartate to the 5-guanidino-3-methyl-2-oxopentanoic acid produced by ArgN, generating the final product, 3-methylarginine. Cannot use arginine analogs, such as D-arginine, L-homoarginine and N-methylarginine for the first transamination. This is 3-methylarginine biosynthesis aminotransferase ArgM from Streptomyces arginensis.